The following is a 113-amino-acid chain: Large ribosomal subunit protein P2 (113 aa).

Residues 60-113 (SKVSSLSAGAGPSGGAAAAGADAGAAEAEKEEEPQEEEADVNMGDIFGGDDEDY) are disordered. Residues 74–85 (GAAAAGADAGAA) are compositionally biased toward low complexity. A compositionally biased stretch (acidic residues) spans 88 to 99 (EKEEEPQEEEAD).

It belongs to the eukaryotic ribosomal protein P1/P2 family. P1 and P2 exist as dimers at the large ribosomal subunit. Post-translationally, phosphorylated.

In terms of biological role, plays an important role in the elongation step of protein synthesis. The protein is Large ribosomal subunit protein P2 of Euplotes raikovi.